A 580-amino-acid chain; its full sequence is Alpha-thujene synthase TPS3, chloroplastic (580 aa).

Residues 1-26 (MALQLLTPSFSFQHSPSPHRLTTLRY) constitute a chloroplast transit peptide. (2E)-geranyl diphosphate is bound by residues Arg-296, Asp-333, Asp-337, Arg-473, and Asp-476. Mg(2+) is bound by residues Asp-333 and Asp-337. Residues 333 to 337 (DDVYD) carry the DDXXD motif motif. Mg(2+)-binding residues include Asp-476, Thr-480, and Glu-484.

The protein belongs to the terpene synthase family. Tpsb subfamily. In terms of assembly, monomer. It depends on Mg(2+) as a cofactor. Mn(2+) serves as cofactor. As to expression, mostly expressed in developing and mature fruits, and, to a lower extent, in male leaves. Barely detectable in female leaves and shoots.

The protein resides in the plastid. The protein localises to the chloroplast. It carries out the reaction (2E)-geranyl diphosphate = alpha-thujene + diphosphate. The enzyme catalyses (2E)-geranyl diphosphate = (1R,5R)-sabinene + diphosphate. The protein operates within secondary metabolite biosynthesis; terpenoid biosynthesis. Its function is as follows. Monoterpene synthase (TPS) involved in the biosynthesis of monoterpene natural products used by traditional Chinese medicine to treat headache, inflammation and intoxication. Catalyzes the conversion of (2E)-geranyl diphosphate (GPP) into alpha-thujene and (1R,5R)-sabinene. The sequence is that of Alpha-thujene synthase TPS3, chloroplastic from Litsea cubeba (Aromatic litsea).